A 334-amino-acid polypeptide reads, in one-letter code: Probable GTP 3',8-cyclase (334 aa).

Positions 24 to 256 (PYGRKVTGLR…RKKYIIDGVE (233 aa)) constitute a Radical SAM core domain. A GTP-binding site is contributed by arginine 33. [4Fe-4S] cluster contacts are provided by cysteine 40 and cysteine 44. Tyrosine 46 provides a ligand contact to S-adenosyl-L-methionine. Cysteine 47 provides a ligand contact to [4Fe-4S] cluster. Lysine 85 is a binding site for GTP. Glycine 89 is a binding site for S-adenosyl-L-methionine. A GTP-binding site is contributed by threonine 113. Residue serine 137 participates in S-adenosyl-L-methionine binding. Lysine 176 contacts GTP. Residues cysteine 269 and cysteine 272 each coordinate [4Fe-4S] cluster. Position 274–276 (274–276 (RLR)) interacts with GTP. Cysteine 286 serves as a coordination point for [4Fe-4S] cluster.

It belongs to the radical SAM superfamily. MoaA family. The cofactor is [4Fe-4S] cluster.

The catalysed reaction is GTP + AH2 + S-adenosyl-L-methionine = (8S)-3',8-cyclo-7,8-dihydroguanosine 5'-triphosphate + 5'-deoxyadenosine + L-methionine + A + H(+). It functions in the pathway cofactor biosynthesis; molybdopterin biosynthesis. Its function is as follows. Catalyzes the cyclization of GTP to (8S)-3',8-cyclo-7,8-dihydroguanosine 5'-triphosphate. This is Probable GTP 3',8-cyclase from Methanosarcina acetivorans (strain ATCC 35395 / DSM 2834 / JCM 12185 / C2A).